The sequence spans 507 residues: ATP synthase subunit alpha, chloroplastic (507 aa).

170-177 (GDRQTGKT) provides a ligand contact to ATP.

Belongs to the ATPase alpha/beta chains family. F-type ATPases have 2 components, CF(1) - the catalytic core - and CF(0) - the membrane proton channel. CF(1) has five subunits: alpha(3), beta(3), gamma(1), delta(1), epsilon(1). CF(0) has four main subunits: a, b, b' and c.

The protein localises to the plastid. It is found in the chloroplast thylakoid membrane. The enzyme catalyses ATP + H2O + 4 H(+)(in) = ADP + phosphate + 5 H(+)(out). Functionally, produces ATP from ADP in the presence of a proton gradient across the membrane. The alpha chain is a regulatory subunit. This chain is ATP synthase subunit alpha, chloroplastic, found in Ceratophyllum demersum (Rigid hornwort).